Reading from the N-terminus, the 485-residue chain is Glutamate--tRNA ligase (485 aa).

The short motif at 11 to 21 (PSPTGYMHVGN) is the 'HIGH' region element. Positions 108, 110, 135, and 137 each coordinate Zn(2+). The 'KMSKS' region signature appears at 252–256 (KLSKR). Residue Lys255 participates in ATP binding.

This sequence belongs to the class-I aminoacyl-tRNA synthetase family. Glutamate--tRNA ligase type 1 subfamily. As to quaternary structure, monomer. It depends on Zn(2+) as a cofactor.

It is found in the cytoplasm. The enzyme catalyses tRNA(Glu) + L-glutamate + ATP = L-glutamyl-tRNA(Glu) + AMP + diphosphate. Catalyzes the attachment of glutamate to tRNA(Glu) in a two-step reaction: glutamate is first activated by ATP to form Glu-AMP and then transferred to the acceptor end of tRNA(Glu). In Clostridium botulinum (strain Loch Maree / Type A3), this protein is Glutamate--tRNA ligase.